A 2850-amino-acid chain; its full sequence is Mucin-6 (2850 aa).

The N-terminal stretch at 1-22 is a signal peptide; the sequence is MLRVRQLLLLLLFRGPLIDAGA. A VWFD 1 domain is found at 43 to 256; sequence GWCSTWGAGH…KLDDPNEICA (214 aa). Disulfide bonds link Cys45–Cys218 and Cys67–Cys255. N-linked (GlcNAc...) asparagine glycosylation is present at Asn94. The segment at 160-183 is disordered; it reads HLTEGQGGDEVGTPGTLKQESKGS. The N-linked (GlcNAc...) asparagine glycan is linked to Asn310. The TIL 1 domain occupies 344 to 399; that stretch reads CPANQVYQECGEVCIKTCSNPQHSCSSPCTFGCFCPHGTLLDDISGNQSCVPVNQC. One can recognise a VWFD 2 domain in the interval 437–621; it reads GHCSLEGGSF…ALEREMDPCS (185 aa). 2 cysteine pairs are disulfide-bonded: Cys439–Cys575 and Cys461–Cys620. N-linked (GlcNAc...) asparagine glycosylation is found at Asn528 and Asn701. In terms of domain architecture, TIL 2 spans 806 to 869; that stretch reads CPEPKTFQSC…DGQCVPAEEC (64 aa). The VWFD 3 domain occupies 908-1080; sequence STCVLYGEGH…NSWKESPLCG (173 aa). 4 disulfides stabilise this stretch: Cys910/Cys1044, Cys932/Cys1079, Cys941/Cys1041, and Cys959/Cys966. N-linked (GlcNAc...) asparagine glycans are attached at residues Asn1017 and Asn1221. Residues 1263–1281 are compositionally biased toward low complexity; the sequence is EFHSSTSANTPVAPSYLPG. Disordered stretches follow at residues 1263–1363, 1377–1400, 1466–1504, 1580–1600, 1626–1650, 1705–1813, 1877–1942, 1968–1992, 2049–2119, 2219–2254, 2276–2295, 2306–2338, 2370–2473, 2511–2621, 2634–2674, and 2692–2761; these read EFHS…TAEL, GMSTSQEGTPTSKIPVTQTTTHRV, VSANSIKPTMSSTGTPVVHTTSGTSSSPQTPRTTHPSTT, TPPVHTTSGTTSSPQTPRTTH, IASPTPSAPQTSLATHLPFSSTSSV, TKTS…SLST, QTKS…RTTH, TSFS…PSTT, QTKSSFSTDRTSTPHLSQSSTVTPTQPTPIPATTNS, IAHTPHTTHSLPTAASSSTT, EQSTTTFPTPSAPQTSLVTSLPPFSTSSVSPTD, TTPP…FRTP, PTNP…TFVS, PTIH…KSTT, and STMG…GTCS. The span at 1294–1312 shows a compositional bias: polar residues; sequence EELTVWTTPKESTVSSGEY. Low complexity predominate over residues 1345–1363; it reads TSKPTASSLSSSTKTTAEL. Composition is skewed to polar residues over residues 1378–1399 and 1466–1484; these read MSTSQEGTPTSKIPVTQTTTHR and VSANSIKPTMSSTGTPVVH. Tandem repeats lie at residues 1440–1555, 1556–1712, 1713–1885, 1886–2054, 2055–2227, 2228–2396, 2397–2563, and 2564–2671. Residues 1440–2671 are approximate repeats; that stretch reads TQNLFSTAPH…VPTFSSFSSK (1232 aa). Over residues 1485 to 1504 the composition is skewed to low complexity; sequence TTSGTSSSPQTPRTTHPSTT. Residues 1626–1639 show a composition bias toward polar residues; the sequence is IASPTPSAPQTSLA. The span at 1705-1719 shows a compositional bias: low complexity; the sequence is TKTSFSTDRTSTSTS. A compositionally biased stretch (polar residues) spans 1720-1757; the sequence is APHLSETSAVTAHQSTPTAVSANSIKPTMSSTGTPVVH. Residues 1758 to 1777 are compositionally biased toward low complexity; it reads TTSGTTSSPQTPRTTHPSTT. Polar residues predominate over residues 1778–1813; it reads VAVSGTVHTTGLPSGTSVHTTTNFPTHSGPQSSLST. The span at 1893 to 1942 shows a compositional bias: low complexity; the sequence is SQPSTVTPTQSTPIPATTNSLMTTGGLTGTPPVHTTSGTTSSPQTPRTTH. Over residues 1968 to 1981 the composition is skewed to polar residues; sequence IASPTPSAPQTSLA. The segment covering 2049–2061 has biased composition (low complexity); sequence TSFSTDRTSTSTS. Polar residues predominate over residues 2062-2099; that stretch reads APHLSETSAVTAHQSTPTAVSANSIKPTMSSTGTPVVH. Over residues 2100-2119 the composition is skewed to low complexity; the sequence is TTSGTTSSPQTPRTTHPSTT. Residues 2227–2238 show a composition bias toward polar residues; it reads DRTSTPHLSQSS. The span at 2282–2295 shows a compositional bias: low complexity; sequence TTHSLPTAASSSTT. A compositionally biased stretch (low complexity) spans 2370-2384; sequence TTPPNTSTPVTHSTS. The segment covering 2385–2429 has biased composition (polar residues); that stretch reads ATTEAQGSFSTERTSTSYLSHPSSTTVHQSTAGPVITSIKSTMGV. Low complexity predominate over residues 2436–2456; sequence HTTSGTTSSPQTPHSTHPIST. Over residues 2457–2466 the composition is skewed to polar residues; the sequence is AAISRTTGIS. Over residues 2516–2533 the composition is skewed to low complexity; it reads SVSSASTSRPLSTSLPTT. Over residues 2534–2560 the composition is skewed to polar residues; the sequence is IKGTGTPQTPVSDINTTSATTQAHSSF. The span at 2561-2584 shows a compositional bias: low complexity; the sequence is PTTRTSTSHLSLPSSMTSTLTPAS. A compositionally biased stretch (polar residues) spans 2585 to 2601; sequence RSASTLQYTPTPSSVSH. Over residues 2639–2674 the composition is skewed to low complexity; that stretch reads TPTPSSRPTSSTGLLSTSKTTSHVPTFSSFSSKSTT. Polar residues predominate over residues 2692 to 2725; the sequence is STMGMTNLPSSGSPDINHTTRPPGSSPLPTSAFL. The span at 2726-2759 shows a compositional bias: low complexity; it reads SRSTSPTGSSSPSTPVSSSNPDSSVSSPPSHPGT. 4 cysteine pairs are disulfide-bonded: Cys2760-Cys2807, Cys2774-Cys2821, Cys2783-Cys2841, and Cys2787-Cys2843. The CTCK domain maps to 2760 to 2849; sequence CSLQEEEHQI…SCVCSPLQCK (90 aa).

In terms of assembly, multimer; disulfide-linked. Post-translationally, O-glycosylated. In terms of tissue distribution, expressed in stomach, duodenum and small intestine.

It localises to the secreted. Functionally, may provide a mechanism for modulation of the composition of the protective mucus layer related to acid secretion or the presence of bacteria and noxious agents in the lumen. Plays an important role in the cytoprotection of epithelial surfaces and are used as tumor markers in a variety of cancers. May play a role in epithelial organogenesis. The chain is Mucin-6 (Muc6) from Mus musculus (Mouse).